The sequence spans 70 residues: uncharacterized protein (70 aa).

The next 2 helical transmembrane spans lie at 19–39 (VIAL…VVGL) and 40–60 (LFKL…VRKF).

The protein resides in the cell membrane. This is an uncharacterized protein from Streptomyces coelicolor (strain ATCC BAA-471 / A3(2) / M145).